The sequence spans 331 residues: Beta-ketoacyl-[acyl-carrier-protein] synthase III (331 aa).

Residues Cys116 and His256 contribute to the active site. An ACP-binding region spans residues 257–261 (QANTR). Residue Asn286 is part of the active site.

This sequence belongs to the thiolase-like superfamily. FabH family. Homodimer.

The protein localises to the cytoplasm. It catalyses the reaction malonyl-[ACP] + acetyl-CoA + H(+) = 3-oxobutanoyl-[ACP] + CO2 + CoA. It participates in lipid metabolism; fatty acid biosynthesis. In terms of biological role, catalyzes the condensation reaction of fatty acid synthesis by the addition to an acyl acceptor of two carbons from malonyl-ACP. Catalyzes the first condensation reaction which initiates fatty acid synthesis and may therefore play a role in governing the total rate of fatty acid production. Possesses both acetoacetyl-ACP synthase and acetyl transacylase activities. Its substrate specificity determines the biosynthesis of branched-chain and/or straight-chain of fatty acids. The protein is Beta-ketoacyl-[acyl-carrier-protein] synthase III of Caldanaerobacter subterraneus subsp. tengcongensis (strain DSM 15242 / JCM 11007 / NBRC 100824 / MB4) (Thermoanaerobacter tengcongensis).